Reading from the N-terminus, the 278-residue chain is 4-hydroxy-tetrahydrodipicolinate reductase (278 aa).

Residues 16 to 21 (GAGGRM) and glutamate 42 each bind NAD(+). Residue arginine 43 coordinates NADP(+). NAD(+) contacts are provided by residues 106-108 (GTT) and 130-133 (AGNY). Histidine 163 serves as the catalytic Proton donor/acceptor. Histidine 164 is a binding site for (S)-2,3,4,5-tetrahydrodipicolinate. Lysine 167 functions as the Proton donor in the catalytic mechanism. Residue 173 to 174 (GT) participates in (S)-2,3,4,5-tetrahydrodipicolinate binding.

It belongs to the DapB family.

It localises to the cytoplasm. It catalyses the reaction (S)-2,3,4,5-tetrahydrodipicolinate + NAD(+) + H2O = (2S,4S)-4-hydroxy-2,3,4,5-tetrahydrodipicolinate + NADH + H(+). It carries out the reaction (S)-2,3,4,5-tetrahydrodipicolinate + NADP(+) + H2O = (2S,4S)-4-hydroxy-2,3,4,5-tetrahydrodipicolinate + NADPH + H(+). It participates in amino-acid biosynthesis; L-lysine biosynthesis via DAP pathway; (S)-tetrahydrodipicolinate from L-aspartate: step 4/4. Its function is as follows. Catalyzes the conversion of 4-hydroxy-tetrahydrodipicolinate (HTPA) to tetrahydrodipicolinate. In Psychrobacter arcticus (strain DSM 17307 / VKM B-2377 / 273-4), this protein is 4-hydroxy-tetrahydrodipicolinate reductase.